Consider the following 500-residue polypeptide: ADP,ATP carrier protein 5 (500 aa).

A run of 11 helical transmembrane segments spans residues 21-41, 62-82, 94-114, 149-169, 184-204, 224-244, 287-307, 328-348, 357-377, 381-401, and 469-489; these read IYNY…CILF, IAGF…VIIY, IFYY…FVIY, YIVY…LLFW, FYTL…FLMM, ITLV…CCLL, LWLL…VEAV, LYIL…NNVM, AVIS…LIVF, ILSL…VSIG, and SISP…IYAV.

Belongs to the ADP/ATP translocase tlc family.

It localises to the cell membrane. Provides the rickettsial cell with host ATP in exchange for rickettsial ADP. This is an obligate exchange system. This energy acquiring activity is an important component of rickettsial parasitism. This is ADP,ATP carrier protein 5 (tlcE) from Rickettsia bellii (strain RML369-C).